The primary structure comprises 123 residues: Small ribosomal subunit protein uS12c (123 aa).

Residues Met1–Glu16 show a composition bias toward polar residues. The tract at residues Met1–Ala23 is disordered.

This sequence belongs to the universal ribosomal protein uS12 family. In terms of assembly, part of the 30S ribosomal subunit.

It is found in the plastid. The protein localises to the chloroplast. In terms of biological role, with S4 and S5 plays an important role in translational accuracy. Located at the interface of the 30S and 50S subunits. The chain is Small ribosomal subunit protein uS12c (rps12) from Staurastrum punctulatum (Green alga).